The following is a 430-amino-acid chain: MGKNVVVLGTQWGDEGKGKIVDLLTEHAAAVVRYQGGHNAGHTLVINGEKTVLHLIPSGILREGVQCLIGNGVVVAPDALMREITKLEEKGVPVRERLRISPAAPLILSYHVALDQAREKARGEAKIGTTGRGIGPAYEDKVARRGLRVGDLFHRERFAAKLGELLDYHNFQLVNYYKEPAIDFQQTLDECMAYAEQLKPMMLDVTAELHNLRRAGKDIMFEGAQGSLLDIDHGTYPYVTSSNTTAGGISTGSGVGPMYLDYILGITKAYTTRVGSGPFPTELFDETGATLAKRGHEFGSTTGRARRCGWFDAVILRRAIDVNSISGICLTKLDVLDGLETINICVGYKNENGAVIDAPSDADSYIGLEPVYEEMPGWSESTLGAKTLEELPAAARAYIKRIEELTGAPIDIISTGPDRNETIVLRHPFA.

GTP-binding positions include 13 to 19 and 41 to 43; these read GDEGKGK and GHT. Aspartate 14 serves as the catalytic Proton acceptor. Residues aspartate 14 and glycine 41 each contribute to the Mg(2+) site. IMP is bound by residues 14–17, 39–42, threonine 130, arginine 144, glutamine 225, threonine 240, and arginine 304; these read DEGK and NAGH. The Proton donor role is filled by histidine 42. 300-306 is a substrate binding site; the sequence is STTGRAR. GTP is bound by residues arginine 306, 332–334, and 414–416; these read KLD and STG.

The protein belongs to the adenylosuccinate synthetase family. In terms of assembly, homodimer. The cofactor is Mg(2+).

The protein localises to the cytoplasm. The catalysed reaction is IMP + L-aspartate + GTP = N(6)-(1,2-dicarboxyethyl)-AMP + GDP + phosphate + 2 H(+). The protein operates within purine metabolism; AMP biosynthesis via de novo pathway; AMP from IMP: step 1/2. Its function is as follows. Plays an important role in the de novo pathway of purine nucleotide biosynthesis. Catalyzes the first committed step in the biosynthesis of AMP from IMP. This is Adenylosuccinate synthetase from Pseudomonas putida (strain W619).